The following is a 149-amino-acid chain: Inner membrane protein YfeZ (149 aa).

Residues 1–18 lie on the Cytoplasmic side of the membrane; it reads MKSTEFHPVHYDAHGRLR. The chain crosses the membrane as a helical span at residues 19–39; the sequence is LPLLFWLVLLLQARTWVLFVI. Residues 40–58 lie on the Periplasmic side of the membrane; that stretch reads AGASREQGTALLNLFYPDH. A helical transmembrane segment spans residues 59–79; the sequence is DNFWLGLIPGIPAVLAFLLSG. Residues 80–89 are Cytoplasmic-facing; sequence RRATFPRTWR. Residues 90–110 form a helical membrane-spanning segment; sequence VLYFLLLLAQVVLLCWQPWLW. The Periplasmic segment spans residues 111–115; it reads LNGES. Residues 116 to 136 traverse the membrane as a helical segment; that stretch reads VSGIGLALVVADIVALIWLLT. At 137-149 the chain is on the cytoplasmic side; it reads NRRLRACFYEVKE.

The protein localises to the cell inner membrane. This chain is Inner membrane protein YfeZ (yfeZ), found in Escherichia coli (strain K12).